A 412-amino-acid polypeptide reads, in one-letter code: POU domain, class 4, transcription factor 2 (412 aa).

The tract at residues 29–96 is disordered; it reads LHSASPGSSA…SEAMRRACLP (68 aa). Positions 31-53 are enriched in low complexity; sequence SASPGSSAPAAPSASSPSSSSNA. Gly residues-rich tracts occupy residues 54–70 and 78–87; these read GSGGGGGGGGGGGGGGR and GSGGGGGGGS. The interval 94–240 is required for transcriptional activation; that stretch reads CLPTPPSNIF…MHQAALSMAH (147 aa). Residues 113–122 carry the POU-IV box motif; it reads RAEALAAVDI. The tract at residues 123-191 is disordered; it reads VSQSKSHHHH…HHHHQPHQAL (69 aa). Basic residues predominate over residues 127 to 138; that stretch reads KSHHHHPPHHSP. Residues 152–169 are compositionally biased toward low complexity; it reads PCTSAASSSSVPISHPSA. Over residues 173–187 the composition is skewed to basic residues; the sequence is THHHHHHHHHHHHQP. Residues 174–188 carry the Nuclear speckle targeting signal motif; that stretch reads HHHHHHHHHHHHQPH. The tract at residues 241-412 is required for DNA-binding and transcriptional repression; the sequence is AHGLPSHMGC…QKRMKYSAGI (172 aa). One can recognise a POU-specific domain in the interval 253–330; that stretch reads DVDADPRDLE…ILQAWLEEAE (78 aa). Residues 348 to 407 constitute a DNA-binding region (homeobox); that stretch reads KKRKRTSIAAPEKRSLEAYFAIQPRPSSEKIAAIAEKLDLKKNVVRVWFCNQRQKQKRMK.

The protein belongs to the POU transcription factor family. Class-4 subfamily. As to quaternary structure, interacts with POU4F1; this interaction inhibits both POU4F1 DNA-binding and transcriptional activities. Interacts (C-terminus) with ESR1 (via DNA-binding domain); this interaction increases the estrogen receptor ESR1 transcriptional activity in a DNA- and ligand 17-beta-estradiol-independent manner. Interacts (via C-terminus) with TP53 (via N-terminus). Interacts with DLX1 (via homeobox DNA-binding domain); this interaction suppresses DLX1-mediated transcriptional activity in postnatal retina enhancing retinal ganglion cell (RGC) differentiation. Interacts with DLX2 (via homeobox DNA-binding domain); this interaction enhances RGC differentiation. Interacts (via C-terminus) with ISL1 (via C-terminus). Interacts with ISL2. Interacts with LHX2. Expressed in the heart, brain and spinal cord. Expressed in cardiomyocytes (at protein level). Expressed in brain and spinal cord. Expressed in dorsal root ganglion (RGD) neurons.

It localises to the nucleus. The protein localises to the nucleus speckle. It is found in the cytoplasm. Functionally, tissue-specific DNA-binding transcription factor involved in the development and differentiation of target cells. Functions either as activator or repressor modulating the rate of target gene transcription through RNA polymerase II enzyme in a promoter-dependent manner. Binds to the consensus octamer motif 5'-AT[A/T]A[T/A]T[A/T]A-3' of promoter of target genes. Plays a fundamental role in the gene regulatory network essential for retinal ganglion cell (RGC) differentiation. Binds to an octamer site to form a ternary complex with ISL1; cooperates positively with ISL1 and ISL2 to potentiate transcriptional activation of RGC target genes being involved in RGC fate commitment in the developing retina and RGC axon formation and pathfinding. Inhibits DLX1 and DLX2 transcriptional activities preventing DLX1- and DLX2-mediated ability to promote amacrine cell fate specification. In cooperation with TP53 potentiates transcriptional activation of BAX promoter activity increasing neuronal cell apoptosis. Negatively regulates BAX promoter activity in the absence of TP53. Acts as a transcriptional coactivator via its interaction with the transcription factor ESR1 by enhancing its effect on estrogen response element (ERE)-containing promoter. Antagonizes the transcriptional stimulatory activity of POU4F1 by preventing its binding to an octamer motif. Involved in TNFSF11-mediated terminal osteoclast differentiation. The polypeptide is POU domain, class 4, transcription factor 2 (Rattus norvegicus (Rat)).